The primary structure comprises 315 residues: Olfactory receptor 51L1 (315 aa).

Over 1 to 27 (MGDWNNSDAVEPIFILRGFPGLEYVHS) the chain is Extracellular. Asn-5 carries an N-linked (GlcNAc...) asparagine glycan. A helical transmembrane segment spans residues 28–48 (WLSILFCLAYLVAFMGNVTIL). Topologically, residues 49–56 (SVIWIESS) are cytoplasmic. A helical transmembrane segment spans residues 57 to 77 (LHQPMYYFISILAVNDLGMSL). At 78–101 (STLPTMLAVLWLDAPEIQASACYA) the chain is on the extracellular side. Cys-99 and Cys-191 are oxidised to a cystine. The helical transmembrane segment at 102–122 (QLFFIHTFTFLESSVLLAMAF) threads the bilayer. The Cytoplasmic segment spans residues 123–141 (DRFVAICHPLHYPTILTNS). Residues 142 to 162 (VIGKIGLACLLRSLGVVLPTP) form a helical membrane-spanning segment. The Extracellular portion of the chain corresponds to 163–198 (LLLRHYHYCHGNALSHAFCLHQDVLRLSCTDARTNS). The helical transmembrane segment at 199-219 (IYGLCVVIATLGVDSIFILLS) threads the bilayer. Over 220–239 (YVLILNTVLDIASREEQLKA) the chain is Cytoplasmic. Residues 240–260 (LNTCVSHICVVLIFFVPVIGV) form a helical membrane-spanning segment. Residues 261-275 (SMVHRFGKHLSPIVH) lie on the Extracellular side of the membrane. Residues 276 to 296 (ILMADIYLLLPPVLNPIVYSV) traverse the membrane as a helical segment. Residues 297-315 (RTKQIRLGILHKFVLRRRF) are Cytoplasmic-facing.

This sequence belongs to the G-protein coupled receptor 1 family.

Its subcellular location is the cell membrane. Odorant receptor. This is Olfactory receptor 51L1 (OR51L1) from Homo sapiens (Human).